Reading from the N-terminus, the 628-residue chain is Glutamyl-tRNA(Gln) amidotransferase subunit E (628 aa).

Belongs to the GatB/GatE family. GatE subfamily. As to quaternary structure, heterodimer of GatD and GatE.

It catalyses the reaction L-glutamyl-tRNA(Gln) + L-glutamine + ATP + H2O = L-glutaminyl-tRNA(Gln) + L-glutamate + ADP + phosphate + H(+). Functionally, allows the formation of correctly charged Gln-tRNA(Gln) through the transamidation of misacylated Glu-tRNA(Gln) in organisms which lack glutaminyl-tRNA synthetase. The reaction takes place in the presence of glutamine and ATP through an activated gamma-phospho-Glu-tRNA(Gln). The GatDE system is specific for glutamate and does not act on aspartate. In Thermococcus gammatolerans (strain DSM 15229 / JCM 11827 / EJ3), this protein is Glutamyl-tRNA(Gln) amidotransferase subunit E.